The following is a 242-amino-acid chain: MPDYQKEIERIGEFLRKIIADRKAVIGISGGIDSSVTLGILSKFFLHENIKAVFMPDATTPKSDYDDVDVLASTFGVKYSTVNIQNIVDTFSKTLSAVDKGAIGNIKSRIRMIVLYYFANIYNGIVVGTTNRTELLLGYYTKYGDGGCDVEPIEHLYKRDIYEIARLLGVPESIIKKKPTAGLWQGQTDEDEIGMPYSKIDDILSSIFDKGELREDPDFKKILDLHSKSDHKRRLPYSLSPD.

27–34 (GISGGIDS) lines the ATP pocket. Position 33 (Asp33) interacts with Mg(2+). Residue Arg109 coordinates deamido-NAD(+). Residue Thr129 participates in ATP binding. Glu134 serves as a coordination point for Mg(2+). Residues Lys142 and Asp149 each contribute to the deamido-NAD(+) site. Positions 158 and 180 each coordinate ATP. Residue 231 to 232 (HK) coordinates deamido-NAD(+).

It belongs to the NAD synthetase family. Homodimer.

It catalyses the reaction deamido-NAD(+) + NH4(+) + ATP = AMP + diphosphate + NAD(+) + H(+). Its pathway is cofactor biosynthesis; NAD(+) biosynthesis; NAD(+) from deamido-NAD(+) (ammonia route): step 1/1. In terms of biological role, catalyzes the ATP-dependent amidation of deamido-NAD to form NAD. Uses ammonia as a nitrogen source. The protein is NH(3)-dependent NAD(+) synthetase of Thermoplasma volcanium (strain ATCC 51530 / DSM 4299 / JCM 9571 / NBRC 15438 / GSS1).